We begin with the raw amino-acid sequence, 233 residues long: DNA repair protein RecO (233 aa).

It belongs to the RecO family.

Involved in DNA repair and RecF pathway recombination. The protein is DNA repair protein RecO of Pseudomonas paraeruginosa (strain DSM 24068 / PA7) (Pseudomonas aeruginosa (strain PA7)).